The chain runs to 306 residues: Erythromycin 3''-O-methyltransferase (306 aa).

S-adenosyl-L-methionine is bound by residues Leu157 and His162.

This sequence belongs to the methyltransferase superfamily.

The catalysed reaction is erythromycin C + S-adenosyl-L-methionine = erythromycin A + S-adenosyl-L-homocysteine + H(+). It carries out the reaction erythromycin D + S-adenosyl-L-methionine = erythromycin B + S-adenosyl-L-homocysteine + H(+). Its pathway is antibiotic biosynthesis; erythromycin biosynthesis. Its function is as follows. S-adenosyl-L-methionine-dependent O-methyltransferase that catalyzes the last step in the erythromycin biosynthesis pathway. Methylates the position 3 of the mycarosyl moiety of erythromycin C, forming the most active form of the antibiotic, erythromycin A. Can also methylate the precursor erythromycin D, forming erythromycin B. In Saccharopolyspora erythraea (strain ATCC 11635 / DSM 40517 / JCM 4748 / NBRC 13426 / NCIMB 8594 / NRRL 2338), this protein is Erythromycin 3''-O-methyltransferase (eryG).